Consider the following 500-residue polypeptide: Protein nucleotidyltransferase YdiU (500 aa).

Residues Gly-96, Gly-98, Arg-99, Lys-119, Asp-131, Gly-132, Arg-182, and Arg-189 each contribute to the ATP site. Asp-258 (proton acceptor) is an active-site residue. The Mg(2+) site is built by Asn-259 and Asp-268. Asp-268 serves as a coordination point for ATP.

It belongs to the SELO family. The cofactor is Mg(2+). Requires Mn(2+) as cofactor.

The catalysed reaction is L-seryl-[protein] + ATP = 3-O-(5'-adenylyl)-L-seryl-[protein] + diphosphate. The enzyme catalyses L-threonyl-[protein] + ATP = 3-O-(5'-adenylyl)-L-threonyl-[protein] + diphosphate. It catalyses the reaction L-tyrosyl-[protein] + ATP = O-(5'-adenylyl)-L-tyrosyl-[protein] + diphosphate. It carries out the reaction L-histidyl-[protein] + UTP = N(tele)-(5'-uridylyl)-L-histidyl-[protein] + diphosphate. The catalysed reaction is L-seryl-[protein] + UTP = O-(5'-uridylyl)-L-seryl-[protein] + diphosphate. The enzyme catalyses L-tyrosyl-[protein] + UTP = O-(5'-uridylyl)-L-tyrosyl-[protein] + diphosphate. Functionally, nucleotidyltransferase involved in the post-translational modification of proteins. It can catalyze the addition of adenosine monophosphate (AMP) or uridine monophosphate (UMP) to a protein, resulting in modifications known as AMPylation and UMPylation. The polypeptide is Protein nucleotidyltransferase YdiU (Rhizobium leguminosarum bv. trifolii (strain WSM2304)).